A 662-amino-acid polypeptide reads, in one-letter code: Methionine--tRNA ligase (662 aa).

Residues 13 to 23 (PYTNGPCHLGH) carry the 'HIGH' region motif. Residues Cys-144, Cys-147, Cys-156, and Cys-160 each coordinate Zn(2+). Positions 326–330 (KFSKS) match the 'KMSKS' region motif. Lys-329 contributes to the ATP binding site. The tRNA-binding domain occupies 564–662 (DFSKVEIKTG…KPVEPGTKIR (99 aa)).

The protein belongs to the class-I aminoacyl-tRNA synthetase family. MetG type 1 subfamily. Homodimer. The cofactor is Zn(2+).

Its subcellular location is the cytoplasm. The enzyme catalyses tRNA(Met) + L-methionine + ATP = L-methionyl-tRNA(Met) + AMP + diphosphate. Is required not only for elongation of protein synthesis but also for the initiation of all mRNA translation through initiator tRNA(fMet) aminoacylation. This is Methionine--tRNA ligase from Methanoregula boonei (strain DSM 21154 / JCM 14090 / 6A8).